The following is a 369-amino-acid chain: DNA replication and repair protein RecF (369 aa).

Position 30–37 (30–37) interacts with ATP; sequence GDNAQGKT.

The protein belongs to the RecF family.

Its subcellular location is the cytoplasm. Functionally, the RecF protein is involved in DNA metabolism; it is required for DNA replication and normal SOS inducibility. RecF binds preferentially to single-stranded, linear DNA. It also seems to bind ATP. This is DNA replication and repair protein RecF from Streptococcus equi subsp. equi (strain 4047).